The following is a 384-amino-acid chain: Spermidine/putrescine import ATP-binding protein PotA (384 aa).

The region spanning Ile6–Ile238 is the ABC transporter domain. Position 40–47 (Gly40–Ser47) interacts with ATP.

It belongs to the ABC transporter superfamily. Spermidine/putrescine importer (TC 3.A.1.11.1) family. In terms of assembly, the complex is composed of two ATP-binding proteins (PotA), two transmembrane proteins (PotB and PotC) and a solute-binding protein (PotD).

The protein resides in the cell membrane. The catalysed reaction is ATP + H2O + polyamine-[polyamine-binding protein]Side 1 = ADP + phosphate + polyamineSide 2 + [polyamine-binding protein]Side 1.. In terms of biological role, part of the ABC transporter complex PotABCD involved in spermidine/putrescine import. Responsible for energy coupling to the transport system. This chain is Spermidine/putrescine import ATP-binding protein PotA, found in Streptococcus pyogenes serotype M12 (strain MGAS2096).